The sequence spans 188 residues: Protein GrpE 2 (188 aa).

This sequence belongs to the GrpE family. In terms of assembly, homodimer.

It localises to the cytoplasm. Functionally, participates actively in the response to hyperosmotic and heat shock by preventing the aggregation of stress-denatured proteins, in association with DnaK and GrpE. It is the nucleotide exchange factor for DnaK and may function as a thermosensor. Unfolded proteins bind initially to DnaJ; upon interaction with the DnaJ-bound protein, DnaK hydrolyzes its bound ATP, resulting in the formation of a stable complex. GrpE releases ADP from DnaK; ATP binding to DnaK triggers the release of the substrate protein, thus completing the reaction cycle. Several rounds of ATP-dependent interactions between DnaJ, DnaK and GrpE are required for fully efficient folding. This Buchnera aphidicola subsp. Acyrthosiphon pisum (strain APS) (Acyrthosiphon pisum symbiotic bacterium) protein is Protein GrpE 2.